A 373-amino-acid chain; its full sequence is NADPH-dependent 3-keto-steroid reductase Hsd3b5 (373 aa).

Residues 10 to 15 (GAGGFL), Tyr155, and Lys159 contribute to the NADP(+) site. The Proton donor role is filled by Lys159. Residues 288–308 (LSLLYWLAFLLETVSFLLRPV) form a helical membrane-spanning segment. Lys350 carries the post-translational modification N6-acetyllysine.

Belongs to the 3-beta-HSD family. In terms of tissue distribution, expressed in the male liver, starting in late puberty.

Its subcellular location is the endoplasmic reticulum membrane. It localises to the mitochondrion membrane. The enzyme catalyses a 3beta-hydroxysteroid + NADP(+) = a 3-oxosteroid + NADPH + H(+). The catalysed reaction is 5alpha-androstane-3beta,17beta-diol + NADP(+) = 17beta-hydroxy-5alpha-androstan-3-one + NADPH + H(+). It participates in steroid metabolism. Functionally, responsible for the reduction of the oxo group on the C-3 of 5alpha-androstane steroids. Catalyzes the conversion of dihydrotestosterone to its inactive form 5alpha-androstanediol, that does not bind androgen receptor/AR. Does not function as an isomerase. The chain is NADPH-dependent 3-keto-steroid reductase Hsd3b5 from Mus musculus (Mouse).